Consider the following 880-residue polypeptide: Protein translocase subunit SecA (880 aa).

ATP-binding positions include Gln87, 105 to 109, and Asp501; that span reads GEGKT. Positions 864, 866, 875, and 876 each coordinate Zn(2+).

The protein belongs to the SecA family. Monomer and homodimer. Part of the essential Sec protein translocation apparatus which comprises SecA, SecYEG and auxiliary proteins SecDF-YajC and YidC. Zn(2+) serves as cofactor.

Its subcellular location is the cell inner membrane. The protein localises to the cytoplasm. It carries out the reaction ATP + H2O + cellular proteinSide 1 = ADP + phosphate + cellular proteinSide 2.. Its function is as follows. Part of the Sec protein translocase complex. Interacts with the SecYEG preprotein conducting channel. Has a central role in coupling the hydrolysis of ATP to the transfer of proteins into and across the cell membrane, serving both as a receptor for the preprotein-SecB complex and as an ATP-driven molecular motor driving the stepwise translocation of polypeptide chains across the membrane. This Orientia tsutsugamushi (strain Boryong) (Rickettsia tsutsugamushi) protein is Protein translocase subunit SecA.